The following is a 553-amino-acid chain: Phenylalanine--tRNA ligase alpha subunit (553 aa).

The L-phenylalanine site is built by T400 and F479. E481 contributes to the Mg(2+) binding site.

The protein belongs to the class-II aminoacyl-tRNA synthetase family. Phe-tRNA synthetase alpha subunit type 2 subfamily. Tetramer of two alpha and two beta subunits. Requires Mg(2+) as cofactor.

It localises to the cytoplasm. It carries out the reaction tRNA(Phe) + L-phenylalanine + ATP = L-phenylalanyl-tRNA(Phe) + AMP + diphosphate + H(+). This is Phenylalanine--tRNA ligase alpha subunit from Treponema pallidum (strain Nichols).